The following is a 130-amino-acid chain: Small ribosomal subunit protein uS8 (130 aa).

The protein belongs to the universal ribosomal protein uS8 family. As to quaternary structure, part of the 30S ribosomal subunit. Contacts proteins S5 and S12.

One of the primary rRNA binding proteins, it binds directly to 16S rRNA central domain where it helps coordinate assembly of the platform of the 30S subunit. The polypeptide is Small ribosomal subunit protein uS8 (Cytophaga hutchinsonii (strain ATCC 33406 / DSM 1761 / CIP 103989 / NBRC 15051 / NCIMB 9469 / D465)).